We begin with the raw amino-acid sequence, 62 residues long: uncharacterized protein (62 aa).

Residues 1–62 are disordered; the sequence is MTSTQNLKDK…PPKKSLSQLP (62 aa). Residues 7–29 show a composition bias toward basic and acidic residues; it reads LKDKFEEEIRQQKEGKGKKEKVW. Positions 32-43 are enriched in polar residues; sequence HSDSSYNKQTAV.

This is an uncharacterized protein from Dictyostelium discoideum (Social amoeba).